A 92-amino-acid polypeptide reads, in one-letter code: Small ribosomal subunit protein uS19c (92 aa).

The protein belongs to the universal ribosomal protein uS19 family.

The protein resides in the plastid. It localises to the chloroplast. Functionally, protein S19 forms a complex with S13 that binds strongly to the 16S ribosomal RNA. This Thalassiosira pseudonana (Marine diatom) protein is Small ribosomal subunit protein uS19c.